Reading from the N-terminus, the 434-residue chain is Alpha-enolase (434 aa).

S40 is a Mg(2+) binding site. Residues H158 and E167 each coordinate substrate. The active-site Proton donor is the E210. Residues D245, E293, and D318 each contribute to the Mg(2+) site. Positions 293 and 318 each coordinate substrate. K343 (proton acceptor) is an active-site residue. Substrate contacts are provided by residues S370–S373 and K394.

The protein belongs to the enolase family. In terms of assembly, homodimer. Requires Mg(2+) as cofactor.

It localises to the cytoplasm. The enzyme catalyses (2R)-2-phosphoglycerate = phosphoenolpyruvate + H2O. It functions in the pathway carbohydrate degradation; glycolysis; pyruvate from D-glyceraldehyde 3-phosphate: step 4/5. This chain is Alpha-enolase (eno1), found in Xenopus laevis (African clawed frog).